The primary structure comprises 278 residues: Large ribosomal subunit protein uL2 (278 aa).

2 disordered regions span residues 29-55 and 225-278; these read PEKSLVRPLHSKGGRNNAGRITVRHQG and VMNP…NKKR. The span at 258 to 278 shows a compositional bias: basic residues; the sequence is RSNKKASNKYIVRRRTKNKKR.

This sequence belongs to the universal ribosomal protein uL2 family. Part of the 50S ribosomal subunit. Forms a bridge to the 30S subunit in the 70S ribosome. Post-translationally, the N-terminus is blocked. In terms of processing, phosphorylated on serine and threonine residues.

One of the primary rRNA binding proteins. Required for association of the 30S and 50S subunits to form the 70S ribosome, for tRNA binding and peptide bond formation. It has been suggested to have peptidyltransferase activity; this is somewhat controversial. Makes several contacts with the 16S rRNA in the 70S ribosome. The chain is Large ribosomal subunit protein uL2 from Streptomyces collinus.